The primary structure comprises 1409 residues: DNA-directed RNA polymerase subunit beta' (1409 aa).

Cys-70, Cys-72, Cys-85, and Cys-88 together coordinate Zn(2+). Residues Asp-461, Asp-463, and Asp-465 each coordinate Mg(2+). Zn(2+)-binding residues include Cys-833, Cys-907, Cys-914, and Cys-917. The segment at 1389 to 1409 (EPVAQAAESEDVPDVSQQEAA) is disordered.

The protein belongs to the RNA polymerase beta' chain family. In terms of assembly, the RNAP catalytic core consists of 2 alpha, 1 beta, 1 beta' and 1 omega subunit. When a sigma factor is associated with the core the holoenzyme is formed, which can initiate transcription. The cofactor is Mg(2+). Zn(2+) is required as a cofactor.

It carries out the reaction RNA(n) + a ribonucleoside 5'-triphosphate = RNA(n+1) + diphosphate. DNA-dependent RNA polymerase catalyzes the transcription of DNA into RNA using the four ribonucleoside triphosphates as substrates. The protein is DNA-directed RNA polymerase subunit beta' of Pelobacter propionicus (strain DSM 2379 / NBRC 103807 / OttBd1).